Consider the following 456-residue polypeptide: GTPase Der (456 aa).

EngA-type G domains are found at residues phenylalanine 3–aspartate 167 and isoleucine 185–asparagine 360. GTP contacts are provided by residues glycine 9–serine 16, aspartate 56–leucine 60, and asparagine 119–glutamate 122. The tract at residues isoleucine 162–alanine 181 is disordered. Positions serine 166–glutamate 178 are enriched in acidic residues. GTP is bound by residues glycine 191 to serine 198, aspartate 238 to leucine 242, and asparagine 303 to aspartate 306. A KH-like domain is found at arginine 361–alanine 445.

This sequence belongs to the TRAFAC class TrmE-Era-EngA-EngB-Septin-like GTPase superfamily. EngA (Der) GTPase family. Associates with the 50S ribosomal subunit.

Its function is as follows. GTPase that plays an essential role in the late steps of ribosome biogenesis. In Bradyrhizobium sp. (strain ORS 278), this protein is GTPase Der.